A 667-amino-acid polypeptide reads, in one-letter code: Beta-galactosidase LacZ (667 aa).

Arg109 is a binding site for substrate. Cys113 is a Zn(2+) binding site. Asn147 provides a ligand contact to substrate. Glu148 serves as the catalytic Proton donor. 3 residues coordinate Zn(2+): Cys153, Cys155, and Cys158. Residue Glu307 is the Nucleophile of the active site. Substrate-binding positions include Trp315 and 355–358 (EKFH).

The protein belongs to the glycosyl hydrolase 42 family.

The enzyme catalyses Hydrolysis of terminal non-reducing beta-D-galactose residues in beta-D-galactosides.. In terms of biological role, catalyzes the hydrolysis of lactose to its constituent monosaccharides glucose and galactose. The polypeptide is Beta-galactosidase LacZ (Lactobacillus acidophilus (strain ATCC 700396 / NCK56 / N2 / NCFM)).